A 254-amino-acid polypeptide reads, in one-letter code: H-2 class II histocompatibility antigen, I-E alpha chain (254 aa).

A signal peptide spans 1 to 24 (RSRALILGVLALTTMLSLCGGEDD). Residues 25-109 (IEADHVAFYG…KDSNFTPAAN (85 aa)) form an alpha-1 region. Topologically, residues 25 to 216 (IEADHVAFYG…IPAPMSELTE (192 aa)) are extracellular. N-linked (GlcNAc...) asparagine glycans are attached at residues asparagine 103 and asparagine 143. The alpha-2 stretch occupies residues 110–203 (EAPQATVFPK…GLEEPVLKHW (94 aa)). Residues 112–204 (PQATVFPKSP…LEEPVLKHWE (93 aa)) enclose the Ig-like C1-type domain. A disulfide bridge links cysteine 132 with cysteine 188. The tract at residues 204–216 (EPEIPAPMSELTE) is connecting peptide. The chain crosses the membrane as a helical span at residues 217-242 (TVVCALGLSVGLVGIVVGTIFIIQGL). The Cytoplasmic portion of the chain corresponds to 243 to 254 (RSGGTSRHPGPL).

Belongs to the MHC class II family.

It localises to the membrane. The chain is H-2 class II histocompatibility antigen, I-E alpha chain from Mus musculus (Mouse).